The sequence spans 90 residues: uncharacterized protein (90 aa).

A disordered region spans residues 1-26 (MFKRSVSRLFCAPAPAPAPRKQPGGR). Residues 33-66 (NLNQSVKKQLNHLEVLERIKKQRKEQKNNRNQVD) adopt a coiled-coil conformation.

This is an uncharacterized protein from Dictyostelium discoideum (Social amoeba).